Here is a 280-residue protein sequence, read N- to C-terminus: Ycf3-interacting protein 1, chloroplastic (280 aa).

The N-terminal 62 residues, 1–62 (MTTQIFQLPL…NNRRFGSLIV (62 aa)), are a transit peptide targeting the chloroplast. Residues 75–103 (PVPLTLEQQEKEKQNRDDEEDEIDEGDVD) form a disordered region. Positions 91-103 (DDEEDEIDEGDVD) are enriched in acidic residues. A helical transmembrane segment spans residues 255-275 (ALYFVSALPVIIGISVVLILF).

The protein belongs to the Y3IP1/CEST family. Interacts with Ycf3. As to expression, expressed in cotyledons, rosette and cauline leaves, stems and sepals.

It localises to the plastid. The protein resides in the chloroplast thylakoid membrane. Functionally, nuclear genome-encoded factor that participates in photosystem I (PSI) biogenesis. Cooperates with the plastid genome-encoded protein PSI assembly Ycf3 in the assembly of stable PSI units in the thylakoid membrane. Involved in light-induced chloroplast development and growth. Involved in the plant response to abiotic and photooxidative stresses. May be involved in the suppression of photooxidative damage. This is Ycf3-interacting protein 1, chloroplastic from Arabidopsis thaliana (Mouse-ear cress).